The following is a 172-amino-acid chain: Disulfide bond formation protein B (172 aa).

Residues 1-13 (MIIRLAGMSVRQG) are Cytoplasmic-facing. The chain crosses the membrane as a helical span at residues 14–30 (CLLGLLMCALMMGVALV). The Periplasmic segment spans residues 31 to 48 (LQYVYGLTPCPLCIGQRI). Cys40 and Cys43 are joined by a disulfide. Residues 49–65 (AVLLAAFVFAIGALHNP) traverse the membrane as a helical segment. Residues 66-72 (AGNLGRG) are Cytoplasmic-facing. A helical membrane pass occupies residues 73–90 (LYAGLAALASVLGLAVAA). Residues 91 to 147 (RHVWLQSLPPENVPSCGPGLDYMMEVLPLWDVLSRVLAGSGECAEIHGSLLGMSIPQ) are Periplasmic-facing. Cys106 and Cys133 form a disulfide bridge. Residues 148 to 166 (WTLLGFAVLLLIPLGMLAG) form a helical membrane-spanning segment. Residues 167 to 172 (IVIRRR) lie on the Cytoplasmic side of the membrane.

The protein belongs to the DsbB family.

Its subcellular location is the cell inner membrane. In terms of biological role, required for disulfide bond formation in some periplasmic proteins. Acts by oxidizing the DsbA protein. This Chromohalobacter salexigens (strain ATCC BAA-138 / DSM 3043 / CIP 106854 / NCIMB 13768 / 1H11) protein is Disulfide bond formation protein B.